A 371-amino-acid chain; its full sequence is Cytochrome b (371 aa).

A run of 4 helical transmembrane segments spans residues 25–45 (FGSMLLSCLMLQVTTGFFLAV), 69–90 (WMMQNTHAIGASLFFICIYIHI), 105–125 (WMSGTTLLITLMATAFFGYIL), and 170–190 (FFALHFILPFIIISLSSLHIL). Heme b-binding residues include H75 and H89. Heme b contacts are provided by H174 and H188. H193 contacts a ubiquinone. 4 helical membrane-spanning segments follow: residues 218–238 (YKDLLLLTLLLTLLLLTTFFL), 280–300 (LGGALALVASILIIMTMPFTH), 312–332 (MSQLMFWTLISTFMTITWAAT), and 339–358 (FMMISQTASMIYFMFFISNP).

The protein belongs to the cytochrome b family. The cytochrome bc1 complex contains 3 respiratory subunits (MT-CYB, CYC1 and UQCRFS1), 2 core proteins (UQCRC1 and UQCRC2) and probably 6 low-molecular weight proteins. It depends on heme b as a cofactor.

It localises to the mitochondrion inner membrane. Component of the ubiquinol-cytochrome c reductase complex (complex III or cytochrome b-c1 complex) that is part of the mitochondrial respiratory chain. The b-c1 complex mediates electron transfer from ubiquinol to cytochrome c. Contributes to the generation of a proton gradient across the mitochondrial membrane that is then used for ATP synthesis. The chain is Cytochrome b (MT-CYB) from Casarea dussumieri (Round Island keel-scaled boa).